The chain runs to 172 residues: Keratin-associated protein 13-3 (172 aa).

Repeat copies occupy residues 46–55 (CQLGSSLYRG), 56–65 (CQETCWRPNS), 66–75 (CQTLCVESSP), 76–85 (CHTSCYYPRT), and 92–101 (CLTMHVGSRG). The tract at residues 46–101 (CQLGSSLYRGCQETCWRPNSCQTLCVESSPCHTSCYYPRTHMLCNSCLTMHVGSRG) is 5 X 10 AA approximate repeats.

The protein belongs to the PMG family. As to quaternary structure, interacts with hair keratins.

In terms of biological role, in the hair cortex, hair keratin intermediate filaments are embedded in an interfilamentous matrix, consisting of hair keratin-associated proteins (KRTAP), which are essential for the formation of a rigid and resistant hair shaft through their extensive disulfide bond cross-linking with abundant cysteine residues of hair keratins. The matrix proteins include the high-sulfur and high-glycine-tyrosine keratins. The sequence is that of Keratin-associated protein 13-3 (KRTAP13-3) from Homo sapiens (Human).